A 143-amino-acid polypeptide reads, in one-letter code: uncharacterized protein (143 aa).

Residues 1-21 (MAAMDTGQRADPSNPGDKEGD) form a disordered region.

This is an uncharacterized protein from Homo sapiens (Human).